The following is a 320-amino-acid chain: Mycothiol acetyltransferase (320 aa).

N-acetyltransferase domains are found at residues 8 to 141 (SHLT…RSLR) and 152 to 320 (LQIR…AALA). Glu-36 provides a ligand contact to 1D-myo-inositol 2-(L-cysteinylamino)-2-deoxy-alpha-D-glucopyranoside. Residues 80 to 82 (LVV) and 88 to 93 (RRGIAT) contribute to the acetyl-CoA site. Residues Glu-179, Lys-229, and Glu-239 each contribute to the 1D-myo-inositol 2-(L-cysteinylamino)-2-deoxy-alpha-D-glucopyranoside site. Acetyl-CoA contacts are provided by residues 243 to 245 (LGV) and 250 to 256 (QGRGLGR). Tyr-284 is a 1D-myo-inositol 2-(L-cysteinylamino)-2-deoxy-alpha-D-glucopyranoside binding site. Position 289-294 (289-294 (NIAAVR)) interacts with acetyl-CoA.

Belongs to the acetyltransferase family. MshD subfamily. In terms of assembly, monomer.

The enzyme catalyses 1D-myo-inositol 2-(L-cysteinylamino)-2-deoxy-alpha-D-glucopyranoside + acetyl-CoA = mycothiol + CoA + H(+). Catalyzes the transfer of acetyl from acetyl-CoA to desacetylmycothiol (Cys-GlcN-Ins) to form mycothiol. The polypeptide is Mycothiol acetyltransferase (Mycobacterium ulcerans (strain Agy99)).